The primary structure comprises 1157 residues: ATP-dependent helicase/deoxyribonuclease subunit B (1157 aa).

In terms of domain architecture, UvrD-like helicase ATP-binding spans 1–277 (MTLQIIAGKS…KLFLENKRAK (277 aa)). 8–15 (GKSGTGKT) lines the ATP pocket. The region spanning 272–578 (ENKRAKSDSL…EFSLLPPSLD (307 aa)) is the UvrD-like helicase C-terminal domain. The [4Fe-4S] cluster site is built by cysteine 794, cysteine 1115, cysteine 1118, and cysteine 1124.

Belongs to the helicase family. AddB/RexB type 1 subfamily. As to quaternary structure, heterodimer of AddA and AddB. Requires Mg(2+) as cofactor. The cofactor is [4Fe-4S] cluster.

The heterodimer acts as both an ATP-dependent DNA helicase and an ATP-dependent, dual-direction single-stranded exonuclease. Recognizes the chi site generating a DNA molecule suitable for the initiation of homologous recombination. The AddB subunit has 5' -&gt; 3' nuclease activity but not helicase activity. In Listeria welshimeri serovar 6b (strain ATCC 35897 / DSM 20650 / CCUG 15529 / CIP 8149 / NCTC 11857 / SLCC 5334 / V8), this protein is ATP-dependent helicase/deoxyribonuclease subunit B.